The chain runs to 583 residues: Nuclear distribution protein nudE homolog 1 (583 aa).

Positions 14–195 (ATLEDTLGWY…QDKFKKQESR (182 aa)) form a coiled coil. Disordered stretches follow at residues 34–68 (LAEF…KAET), 211–339 (TFDG…TSNS), and 358–583 (HSVR…GETY). Over residues 35–67 (AEFRDSSRELEQELEKDIERAEKQERHHQEKAE) the composition is skewed to basic and acidic residues. Composition is skewed to polar residues over residues 219–235 (PGST…TDSK), 279–319 (RSRL…TMRT), 329–339 (SASNKLPTSNS), 379–392 (NVYS…SITI), and 399–422 (SGSA…STPK). Low complexity predominate over residues 453 to 469 (RPSSRASTSYATSYARP). Polar residues predominate over residues 529–538 (RRGTYSSQGG).

This sequence belongs to the nudE family. Self-associates. Interacts with PAC1.

Its subcellular location is the cytoplasm. The protein resides in the cytoskeleton. Its function is as follows. Required for nuclear migration. This Gibberella zeae (strain ATCC MYA-4620 / CBS 123657 / FGSC 9075 / NRRL 31084 / PH-1) (Wheat head blight fungus) protein is Nuclear distribution protein nudE homolog 1 (NDE1).